The primary structure comprises 505 residues: 11S globulin seed storage protein 1 (505 aa).

Positions 1-24 (MAKPILLSIYLCLIIVALFNGCLA) are cleaved as a signal peptide. 2 cysteine pairs are disulfide-bonded: cysteine 37-cysteine 70 and cysteine 113-cysteine 323. Residues 42–255 (LDALEPTNRI…AFNVDTETAR (214 aa)) enclose the Cupin type-1 1 domain. 3 igE-binding regions span residues 118–132 (EESQ…RREF), 208–219 (EQHRRQQQHQQR), and 238–249 (FDAEFLADAFNV). Residues 193 to 232 (GNPDDEFRPQGQQEYEQHRRQQQHQQRRGEHGEQQRDLGN) are disordered. A compositionally biased stretch (basic and acidic residues) spans 219–228 (RRGEHGEQQR). Basic and acidic residues predominate over residues 282–316 (WSREEQEHEERKERERERESESERRQSRRGGRDDN). The tract at residues 282 to 318 (WSREEQEHEERKERERERESESERRQSRRGGRDDNGL) is disordered. The NGXEET; peptidase recognition motif motif lies at 316–321 (NGLEET). The 150-residue stretch at 329–478 (ENIGDPSRAD…AFQIPREDAR (150 aa)) folds into the Cupin type-1 2 domain.

It belongs to the 11S seed storage protein (globulins) family. Homohexamer. Each subunit is composed of an acidic and a basic chain derived from a single precursor and linked by a disulfide bond. In terms of tissue distribution, expressed in seeds (at protein level). Expressed in seeds.

Its function is as follows. Seed storage protein. This chain is 11S globulin seed storage protein 1, found in Carya illinoinensis (Pecan).